Consider the following 529-residue polypeptide: Berberine bridge enzyme-like 7 (529 aa).

An N-terminal signal peptide occupies residues 1 to 19; that stretch reads MKEALSILCLALLVSVSEA. Residues Cys32 and Cys95 are joined by a disulfide bond. Asn52 carries N-linked (GlcNAc...) asparagine glycosylation. Residues 69 to 247 form the FAD-binding PCMH-type domain; the sequence is YSSPNFKKLL…LSWKINLVKV (179 aa). Positions 110 to 172 form a cross-link, 6-(S-cysteinyl)-8alpha-(pros-histidyl)-FAD (His-Cys); it reads HDLEGLSYRS…QTLAFPAGVC (63 aa). N-linked (GlcNAc...) asparagine glycans are attached at residues Asn257, Asn341, and Asn439.

The protein belongs to the oxygen-dependent FAD-linked oxidoreductase family. FAD is required as a cofactor. Post-translationally, the FAD cofactor is bound via a bicovalent 6-S-cysteinyl, 8alpha-N1-histidyl FAD linkage.

The protein resides in the secreted. It localises to the cell wall. Probable flavin-dependent oxidoreductase. The polypeptide is Berberine bridge enzyme-like 7 (Arabidopsis thaliana (Mouse-ear cress)).